Here is a 398-residue protein sequence, read N- to C-terminus: Acetate kinase (398 aa).

Asn7 contacts Mg(2+). ATP is bound at residue Lys14. Arg92 is a substrate binding site. Asp149 functions as the Proton donor/acceptor in the catalytic mechanism. ATP is bound by residues 208–212, 283–285, and 331–335; these read HLGNG, DCR, and GIGEN. Glu385 serves as a coordination point for Mg(2+).

Belongs to the acetokinase family. Homodimer. Mg(2+) serves as cofactor. The cofactor is Mn(2+).

Its subcellular location is the cytoplasm. It catalyses the reaction acetate + ATP = acetyl phosphate + ADP. It participates in metabolic intermediate biosynthesis; acetyl-CoA biosynthesis; acetyl-CoA from acetate: step 1/2. Catalyzes the formation of acetyl phosphate from acetate and ATP. Can also catalyze the reverse reaction. This chain is Acetate kinase, found in Fusobacterium nucleatum subsp. nucleatum (strain ATCC 25586 / DSM 15643 / BCRC 10681 / CIP 101130 / JCM 8532 / KCTC 2640 / LMG 13131 / VPI 4355).